The following is a 179-amino-acid chain: Ubiquitin-conjugating enzyme E2 C (179 aa).

A compositionally biased stretch (polar residues) spans 1 to 14; the sequence is MASQNRDPAATSVT. Residues 1-31 are disordered; the sequence is MASQNRDPAATSVTAARKGAEPSGGAARGPV. Ala-2 bears the N-acetylalanine mark. Ser-3 is modified (phosphoserine). One can recognise a UBC core domain in the interval 30 to 175; sequence PVGKRLQQEL…LQETYSKQVT (146 aa). The Glycyl thioester intermediate role is filled by Cys-114.

The protein belongs to the ubiquitin-conjugating enzyme family. In terms of assembly, component of the APC/C complex, composed of at least 14 distinct subunits that assemble into a complex of at least 19 chains with a combined molecular mass of around 1.2 MDa. Within this complex, directly interacts with ANAPC2. In terms of processing, autoubiquitinated by the APC/C complex, leading to its degradation by the proteasome. Its degradation plays a central role in APC/C regulation, allowing cyclin-A accumulation before S phase entry. APC/C substrates inhibit the autoubiquitination of UBE2C/UBCH10 but not its E2 function, hence APC/C remaining active until its substrates have been destroyed.

The catalysed reaction is S-ubiquitinyl-[E1 ubiquitin-activating enzyme]-L-cysteine + [E2 ubiquitin-conjugating enzyme]-L-cysteine = [E1 ubiquitin-activating enzyme]-L-cysteine + S-ubiquitinyl-[E2 ubiquitin-conjugating enzyme]-L-cysteine.. The enzyme catalyses S-ubiquitinyl-[E1 ubiquitin-activating enzyme]-L-cysteine + [acceptor protein]-L-lysine = [E1 ubiquitin-activating enzyme]-L-cysteine + N(6)-monoubiquitinyl-[acceptor protein]-L-lysine.. It participates in protein modification; protein ubiquitination. In terms of biological role, accepts ubiquitin from the E1 complex and catalyzes its covalent attachment to other proteins. In vitro catalyzes 'Lys-11'- and 'Lys-48'-linked polyubiquitination. Acts as an essential factor of the anaphase promoting complex/cyclosome (APC/C), a cell cycle-regulated ubiquitin ligase that controls progression through mitosis. Acts by initiating 'Lys-11'-linked polyubiquitin chains on APC/C substrates, leading to the degradation of APC/C substrates by the proteasome and promoting mitotic exit. This chain is Ubiquitin-conjugating enzyme E2 C (UBE2C), found in Macaca fascicularis (Crab-eating macaque).